A 372-amino-acid polypeptide reads, in one-letter code: Molybdopterin synthase catalytic subunit (372 aa).

Substrate contacts are provided by residues 101-102 (HR), lysine 117, and 124-126 (KKE).

The protein belongs to the MoaE family. MOCS2B subfamily. As to quaternary structure, heterotetramer; composed of 2 small (Mocs2A) and 2 large (Mocs2B) subunits.

Its subcellular location is the cytoplasm. The catalysed reaction is 2 [molybdopterin-synthase sulfur-carrier protein]-C-terminal-Gly-aminoethanethioate + cyclic pyranopterin phosphate + H2O = molybdopterin + 2 [molybdopterin-synthase sulfur-carrier protein]-C-terminal Gly-Gly + 2 H(+). Its pathway is cofactor biosynthesis; molybdopterin biosynthesis. Its function is as follows. Catalytic subunit of the molybdopterin synthase complex, a complex that catalyzes the conversion of precursor Z into molybdopterin. Acts by mediating the incorporation of 2 sulfur atoms from thiocarboxylated Mocs2A into precursor Z to generate a dithiolene group. The chain is Molybdopterin synthase catalytic subunit from Drosophila willistoni (Fruit fly).